The following is a 339-amino-acid chain: Phenylalanine--tRNA ligase alpha subunit (339 aa).

E254 serves as a coordination point for Mg(2+).

Belongs to the class-II aminoacyl-tRNA synthetase family. Phe-tRNA synthetase alpha subunit type 1 subfamily. In terms of assembly, tetramer of two alpha and two beta subunits. Mg(2+) is required as a cofactor.

The protein localises to the cytoplasm. The enzyme catalyses tRNA(Phe) + L-phenylalanine + ATP = L-phenylalanyl-tRNA(Phe) + AMP + diphosphate + H(+). This Caldanaerobacter subterraneus subsp. tengcongensis (strain DSM 15242 / JCM 11007 / NBRC 100824 / MB4) (Thermoanaerobacter tengcongensis) protein is Phenylalanine--tRNA ligase alpha subunit.